Consider the following 119-residue polypeptide: Large ribosomal subunit protein bL20 (119 aa).

The protein belongs to the bacterial ribosomal protein bL20 family.

Functionally, binds directly to 23S ribosomal RNA and is necessary for the in vitro assembly process of the 50S ribosomal subunit. It is not involved in the protein synthesizing functions of that subunit. This Alkaliphilus metalliredigens (strain QYMF) protein is Large ribosomal subunit protein bL20.